Here is a 235-residue protein sequence, read N- to C-terminus: Modulator of macroautophagy TMEM150B (235 aa).

The Cytoplasmic portion of the chain corresponds to 1 to 8 (MWGYLSLL). Residues 9–29 (PMCLAFWAIAGIWTVFSLAVV) form a helical membrane-spanning segment. The Extracellular segment spans residues 30 to 51 (NKAVNLTDGFPYISVCGNVPPQ). N-linked (GlcNAc...) asparagine glycosylation occurs at asparagine 34. The chain crosses the membrane as a helical span at residues 52–72 (SCIFSQVLNIGAASAAWICIL). At 73–88 (RYYQLRDWGVRKWHNQ) the chain is on the cytoplasmic side. The helical transmembrane segment at 89–109 (VILWTGLLCALGTSIVGNFQE) threads the bilayer. The Extracellular portion of the chain corresponds to 110-116 (KNQRATH). A helical membrane pass occupies residues 117-137 (LTGAFLAFFVGIVYFWLQLFL). Residues 138–156 (SWRMKNLPQPGAPWIGPLR) are Cytoplasmic-facing. The chain crosses the membrane as a helical span at residues 157–177 (LVLCSACFILEVAMVVLHSWS). Topologically, residues 178-180 (MRS) are extracellular. The chain crosses the membrane as a helical span at residues 181–201 (VSAICEWVAAMLLFILFGLLA). Topologically, residues 202-235 (VDFSRLDSCTLCLQPGSGSLRPPPDSPTSLHVQL) are cytoplasmic.

The protein belongs to the DRAM/TMEM150 family.

The protein localises to the cell membrane. It is found in the endosome membrane. It localises to the cytoplasmic vesicle. The protein resides in the autophagosome membrane. Functionally, modulator of macroautophagy that causes accumulation of autophagosomes under basal conditions and enhances autophagic flux. Represses cell death and promotes long-term clonogenic survival of cells grown in the absence of glucose in a macroautophagy-independent manner. May have some role in extracellular matrix engulfment or growth factor receptor recycling, both of which can modulate cell survival. This Bos taurus (Bovine) protein is Modulator of macroautophagy TMEM150B.